The sequence spans 404 residues: Glucose-1-phosphate adenylyltransferase 2 (404 aa).

Residues Tyr97, Gly162, 177 to 178 (EK), and Ser195 each bind alpha-D-glucose 1-phosphate.

This sequence belongs to the bacterial/plant glucose-1-phosphate adenylyltransferase family. As to quaternary structure, homotetramer.

The catalysed reaction is alpha-D-glucose 1-phosphate + ATP + H(+) = ADP-alpha-D-glucose + diphosphate. It functions in the pathway glycan biosynthesis; glycogen biosynthesis. Its function is as follows. Involved in the biosynthesis of ADP-glucose, a building block required for the elongation reactions to produce glycogen. Catalyzes the reaction between ATP and alpha-D-glucose 1-phosphate (G1P) to produce pyrophosphate and ADP-Glc. The polypeptide is Glucose-1-phosphate adenylyltransferase 2 (Vibrio vulnificus (strain YJ016)).